A 352-amino-acid polypeptide reads, in one-letter code: MITKNEALDFLKLNSINSILEKLEGINTQNSSKTITFSKNAFIPVCNWCRNVCGYCTFRNENFKLLKMDEMKEILTKANAFGCREALFTFGENVDENEKVKEELKKMGYYGILEYLYEISAWCLENTNLLPHTNCGILSYDELEYLREVNASMGLMLENSSARLCSTIAHEKSPGKDPNLRIEMIENAGKLKIPFTTGILIGIGETLEERIDSIFEIKRIHEKYGHIQEVIVQNFRSKPLIPMENYKEPSPIEMFKMIILSKLILEGISIQVPPNLNRETGQLFLMAGIDDWGGVSPLTKDFVNPEAPWPDIEELNSFSKELGFELKERLPVYEKYISKEWLDKKVLEKIKK.

The region spanning 35-275 (ITFSKNAFIP…EGISIQVPPN (241 aa)) is the Radical SAM core domain. Residues Cys-49, Cys-53, and Cys-56 each coordinate [4Fe-4S] cluster.

It belongs to the radical SAM superfamily. CofG family. In terms of assembly, consists of two subunits, CofG and CofH. [4Fe-4S] cluster is required as a cofactor.

It carries out the reaction 5-amino-5-(4-hydroxybenzyl)-6-(D-ribitylimino)-5,6-dihydrouracil + S-adenosyl-L-methionine = 7,8-didemethyl-8-hydroxy-5-deazariboflavin + 5'-deoxyadenosine + L-methionine + NH4(+) + H(+). The protein operates within cofactor biosynthesis; coenzyme F0 biosynthesis. Functionally, catalyzes the radical-mediated synthesis of 7,8-didemethyl-8-hydroxy-5-deazariboflavin from 5-amino-5-(4-hydroxybenzyl)-6-(D-ribitylimino)-5,6-dihydrouracil. The sequence is that of 7,8-didemethyl-8-hydroxy-5-deazariboflavin synthase from Methanococcus maripaludis (strain C5 / ATCC BAA-1333).